The sequence spans 1091 residues: Integrin alpha-6 (1091 aa).

Positions 1-23 (MAVAGQLCLLYLSAGLLARLGTA) are cleaved as a signal peptide. The Extracellular portion of the chain corresponds to 24 to 1011 (FNLDTREDNV…FPSKTVAQYS (988 aa)). 7 FG-GAP repeats span residues 30–95 (EDNV…GPCT), 101–166 (NDAD…IEDD), 176–229 (DGRL…FFDM), 244–300 (DHDE…KSAH), 301–363 (LLPE…KWSN), 364–419 (VKPI…GIIT), and 420–479 (KPTQ…VTPN). Asn78 is a glycosylation site (N-linked (GlcNAc...) asparagine). Disulfide bonds link Cys86–Cys94, Cys131–Cys154, and Cys175–Cys188. Asn223 and Asn284 each carry an N-linked (GlcNAc...) asparagine glycan. Ca(2+)-binding residues include Asp324, Asn326, Asp328, and Asp332. The N-linked (GlcNAc...) asparagine glycan is linked to Asn370. Asp386, Asn388, Asp390, Tyr392, Asp394, Asp441, Asp443, Asn445, Tyr447, and Asp449 together coordinate Ca(2+). Disulfide bonds link Cys489-Cys496, Cys502-Cys562, Cys626-Cys632, and Cys726-Cys737. N-linked (GlcNAc...) asparagine glycans are attached at residues Asn731, Asn746, and Asn927. 2 disulfides stabilise this stretch: Cys881–Cys928 and Cys934–Cys939. N-linked (GlcNAc...) asparagine glycosylation is present at Asn958. A helical transmembrane segment spans residues 1012–1037 (GVAWWIILLAVLAGILMLALLVFLLW). Residues 1038-1091 (KCGFFKRSRYDDSIPRYHAVRIRKEEREIKDEKHMDNLEKKQWITKWNENESYS) are Cytoplasmic-facing. Cys1039 carries S-palmitoyl cysteine; by DHHC3 lipidation. Residues 1040 to 1044 (GFFKR) carry the GFFKR motif motif. Residue Arg1064 is modified to Phosphoserine.

This sequence belongs to the integrin alpha chain family. Heterodimer of an alpha and a beta subunit. The alpha subunit is composed of a heavy and a light chain linked by a disulfide bond. Alpha-6 associates with either beta-1 (ITGB1) or beta-4 (ITGB4) to form ITGA6:ITGB1 and ITGA6:ITGB4, respectively. ITGA6:ITGB1 is found in a complex with CD9; interaction takes place in oocytes and is involved in sperm-egg fusion. ITGA6:ITGB4 is found in a ternary complex with NRG1 and ERBB3. ITGA6:ITGB4 is found in a ternary complex with IGF1 and IGF1R. ITGA6:ITGB4 interacts with IGF2. Interacts with ADAM9. Interacts with RAB21. Interacts with MDK. ITGA6:ITGB1 interacts with MDK; this interaction mediates MDK-induced neurite outgrowth. Interacts with CD82; this interaction down-regulates ITGA6-mediated cell adhesion. Isoforms containing segment A, but not segment B, are the major targets for PMA-induced phosphorylation. Phosphorylation occurs on 'Ser-1064' of isoform alpha-6X1A. Phosphorylation is not required for the induction of integrin alpha-6A/beta-1 high affinity but may reduce the affinity for ligand. Post-translationally, undergoes PLAU-mediated cleavage at residues Arg-595-596-Arg in a time-dependent manner to produce processed integrin alpha-6 (alpha6p). In terms of processing, palmitoylation by DHHC3 enhances stability and cell surface expression. As to expression, expressed at low levels in normal skin tissue with elevated levels in skin tumors.

It is found in the cell membrane. In terms of biological role, integrin alpha-6/beta-1 (ITGA6:ITGB1) is a receptor for laminin on platelets. Integrin alpha-6/beta-1 (ITGA6:ITGB1) is present in oocytes and is involved in sperm-egg fusion. Integrin alpha-6/beta-4 (ITGA6:ITGB4) is a receptor for laminin in epithelial cells and it plays a critical structural role in the hemidesmosome. ITGA6:ITGB4 binds to NRG1 (via EGF domain) and this binding is essential for NRG1-ERBB signaling. ITGA6:ITGB4 binds to IGF1 and this binding is essential for IGF1 signaling. ITGA6:ITGB4 binds to IGF2 and this binding is essential for IGF2 signaling. The protein is Integrin alpha-6 (Itga6) of Mus musculus (Mouse).